The primary structure comprises 209 residues: Large ribosomal subunit protein uL3 (209 aa).

Gln-150 is subject to N5-methylglutamine.

It belongs to the universal ribosomal protein uL3 family. Part of the 50S ribosomal subunit. Forms a cluster with proteins L14 and L19. Post-translationally, methylated by PrmB.

Its function is as follows. One of the primary rRNA binding proteins, it binds directly near the 3'-end of the 23S rRNA, where it nucleates assembly of the 50S subunit. The sequence is that of Large ribosomal subunit protein uL3 from Vibrio cholerae serotype O1 (strain ATCC 39541 / Classical Ogawa 395 / O395).